Consider the following 444-residue polypeptide: MQVTTEAVSGVARRLNVSVPTSRINEQFEARLKRTAKTVKINGFRPGKVPANVVRREYGASIYQEVVNDIIRDSVFEAIQQEKINAVGMPNIEKVEHKEDALVFEATVEVYPEVEVKAFDGLEVERKTAEIKDADVDTMIENLQKQRQTWAVTKGMAKKDMQVTFDFEGSIDGEKFEGGSAEDFKLVLGSGRMIPGFEDGIIGMKAGEEKVIDVTFPEDYQAENLAGKAAQFKITVKQVEKPKLPEIDAEFLKIFGVSEEEGIEKLKADVRKNMEREVRNGLRNQVKQAAFDALVAANEIEVPAAMVAQEIDRQRQQMVQQFTQQFGGAGAQSFDKSMLPDELFKEQAERSVKLGVLVSKVLADAKLEVDQARVDAYIDDMASSYEDPTEVIEYFKNDAQQRAQIEAVVLEDQVVDHILASAKVTDKAVSYEDLLKEQQARRMG.

The PPIase FKBP-type domain maps to 160–245; sequence DMQVTFDFEG…VKQVEKPKLP (86 aa).

This sequence belongs to the FKBP-type PPIase family. Tig subfamily.

The protein resides in the cytoplasm. The enzyme catalyses [protein]-peptidylproline (omega=180) = [protein]-peptidylproline (omega=0). Involved in protein export. Acts as a chaperone by maintaining the newly synthesized protein in an open conformation. Functions as a peptidyl-prolyl cis-trans isomerase. The polypeptide is Trigger factor (Acinetobacter baumannii (strain AB0057)).